A 635-amino-acid chain; its full sequence is ADP-ribosylation factor-binding protein GGA1 (635 aa).

M1 carries the N-acetylmethionine modification. One can recognise a VHS domain in the interval A17–S147. The segment at K114–D273 is interaction with ARF3. Positions D171–R298 constitute a GAT domain. At S185 the chain carries Phosphoserine. Residues G299–P505 form a unstructured hinge region. The disordered stretch occupies residues D305–L349. Over residues G313 to D325 the composition is skewed to low complexity. S354 carries the post-translational modification Phosphoserine. The short motif at D357 to M361 is the Autoinhibitory element. 2 disordered regions span residues S362–L422 and R455–E490. The span at N383 to S393 shows a compositional bias: polar residues. S417 carries the phosphoserine modification. A compositionally biased stretch (low complexity) spans S459–S476. Residues P477–A486 show a composition bias toward pro residues. Residues S506–P627 form the GAE domain.

This sequence belongs to the GGA protein family. As to quaternary structure, monomer. Interacts with GGA2 and GGA3. Binds to clathrin and activated ARFs, including ARF1, ARF5 and ARF6. Interacts with RABEP1 and RABGEF1. Interacts with the type-I membrane proteins LRP3, M6PR/CD-MPR and IGF2R/CI-MPR. Interacts (via N-terminal VHS domain) with SORL1/sorLA and SORT1 (via C-terminal cytosolic domain). Interacts with EPN4. Interacts with CCDC91. Interacts with HEATR5B/p200a. Interacts with SYNRG/gamma-synergin. Interacts (via GAE doamin) with NECAP1 and NECAP2. Interacts (via GAE domain) with AFTPH/aftiphilin. Interacts with TSG101 and UBC. Interacts with RNF11. Interacts (via VHS domain) with BACE1 (via DXXLL motif); the interaction highly increases when BACE1 is phosphorylated at 'Ser-498'. Interacts with CNST. Interacts with ADRA2B. Interacts with ARL3; the interaction recruits, in collaboration with RABEP1, PKD1:PKD2 complex to trans-Golgi network and is required for ciliary targeting. Post-translationally, phosphorylated by CK2 and dephosphorylated by PP2A. Phosphorylation of GGA1 allows the internal DXXLL motif to bind the VHS domain and to inhibit the recognition of cargo signals. In terms of processing, ubiquitinated.

The protein localises to the golgi apparatus. The protein resides in the trans-Golgi network membrane. It localises to the endosome membrane. Its subcellular location is the early endosome membrane. In terms of biological role, plays a role in protein sorting and trafficking between the trans-Golgi network (TGN) and endosomes. Mediates the ARF-dependent recruitment of clathrin to the TGN and binds ubiquitinated proteins and membrane cargo molecules with a cytosolic acidic cluster-dileucine (DXXLL) motif. Mediates export of the GPCR receptor ADRA2B to the cell surface. Required for targeting PKD1:PKD2 complex from the trans-Golgi network to the cilium membrane. Regulates retrograde transport of proteins such as phosphorylated form of BACE1 from endosomes to the trans-Golgi network. The sequence is that of ADP-ribosylation factor-binding protein GGA1 (Gga1) from Mus musculus (Mouse).